Here is a 39-residue protein sequence, read N- to C-terminus: Phosphate starvation-inducible protein 1 (39 aa).

It is found in the cell outer membrane. The polypeptide is Phosphate starvation-inducible protein 1 (Pseudomonas fluorescens).